The chain runs to 303 residues: Coenzyme PQQ synthesis protein B (303 aa).

Belongs to the PqqB family.

Its pathway is cofactor biosynthesis; pyrroloquinoline quinone biosynthesis. Its function is as follows. May be involved in the transport of PQQ or its precursor to the periplasm. The sequence is that of Coenzyme PQQ synthesis protein B from Pseudomonas syringae pv. tomato (strain ATCC BAA-871 / DC3000).